The chain runs to 860 residues: Protein argonaute-3 (860 aa).

An N-acetylmethionine modification is found at methionine 1. The 120-residue stretch at 230-349 (PVIQFMCEVL…LPLEVCNIVA (120 aa)) folds into the PAZ domain. The Piwi domain occupies 518–819 (LIIVILPGKT…VAFRARYHLV (302 aa)). The interaction with guide RNA stretch occupies residues 530–567 (YAEVKRVGDTLLGMATQCVQVKNVIKTSPQTLSNLCLK). Positions 598, 638, and 670 each coordinate a divalent metal cation. Residues 758-805 (QGTSRPSHYHVLWDDNFFTADELQLLTYQLCHTYVRCTRSVSIPAPAY) are interaction with guide RNA. An a divalent metal cation-binding site is contributed by histidine 808. At serine 825 the chain carries Phosphoserine.

It belongs to the argonaute family. Ago subfamily. Interacts with EIF4B, IMP8, PRMT5 and TNRC6B. Interacts with APOBEC3F, APOBEC3G and APOBEC3H. Interacts with EDC4. Post-translationally, ubiquitinated on surface-exposed lysines by a SCF-like E3 ubiquitin-protein ligase complex containing ZSWIM8 during target-directed microRNA degradation (TDMD), a process that mediates degradation of microRNAs (miRNAs). Ubiquitination by the SCF-like E3 ubiquitin-protein ligase complex containing ZSWIM8 leads to its subsequent degradation, thereby exposing miRNAs for degradation. ZSWIM8 recognizes and binds AGO3 when it is engaged with a TDMD target.

It is found in the cytoplasm. The protein localises to the P-body. The enzyme catalyses Endonucleolytic cleavage to 5'-phosphomonoester.. Functionally, required for RNA-mediated gene silencing (RNAi). Binds to short RNAs such as microRNAs (miRNAs) and represses the translation of mRNAs which are complementary to them. Proposed to be involved in stabilization of small RNA derivates (siRNA) derived from processed RNA polymerase III-transcribed Alu repeats containing a DR2 retinoic acid response element (RARE) in stem cells and in the subsequent siRNA-dependent degradation of a subset of RNA polymerase II-transcribed coding mRNAs by recruiting a mRNA decapping complex involving EDC4. Possesses RNA slicer activity but only on select RNAs bearing 5'- and 3'-flanking sequences to the region of guide-target complementarity. The sequence is that of Protein argonaute-3 (Ago3) from Mus musculus (Mouse).